A 330-amino-acid polypeptide reads, in one-letter code: Glucokinase (330 aa).

Belongs to the ROK (NagC/XylR) family.

The protein localises to the cytoplasm. It catalyses the reaction D-glucose + ATP = D-glucose 6-phosphate + ADP + H(+). The protein is Glucokinase (glcK) of Halalkalibacterium halodurans (strain ATCC BAA-125 / DSM 18197 / FERM 7344 / JCM 9153 / C-125) (Bacillus halodurans).